The sequence spans 73 residues: Translation initiation factor IF-1 3 (73 aa).

Residues 1–72 (MAKEELVEFG…TKGRINYRHK (72 aa)) enclose the S1-like domain.

Belongs to the IF-1 family. Component of the 30S ribosomal translation pre-initiation complex which assembles on the 30S ribosome in the order IF-2 and IF-3, IF-1 and N-formylmethionyl-tRNA(fMet); mRNA recruitment can occur at any time during PIC assembly.

It localises to the cytoplasm. Its function is as follows. One of the essential components for the initiation of protein synthesis. Stabilizes the binding of IF-2 and IF-3 on the 30S subunit to which N-formylmethionyl-tRNA(fMet) subsequently binds. Helps modulate mRNA selection, yielding the 30S pre-initiation complex (PIC). Upon addition of the 50S ribosomal subunit IF-1, IF-2 and IF-3 are released leaving the mature 70S translation initiation complex. In Cupriavidus metallidurans (strain ATCC 43123 / DSM 2839 / NBRC 102507 / CH34) (Ralstonia metallidurans), this protein is Translation initiation factor IF-1 3.